A 110-amino-acid chain; its full sequence is Nucleoid-associated protein PsycPRwf_1729 (110 aa).

This sequence belongs to the YbaB/EbfC family. In terms of assembly, homodimer.

The protein localises to the cytoplasm. Its subcellular location is the nucleoid. Functionally, binds to DNA and alters its conformation. May be involved in regulation of gene expression, nucleoid organization and DNA protection. In Psychrobacter sp. (strain PRwf-1), this protein is Nucleoid-associated protein PsycPRwf_1729.